The following is a 779-amino-acid chain: Acyl-CoA dehydrogenase family member 11 (779 aa).

Lysine 163, lysine 166, and lysine 175 each carry N6-acetyllysine. Serine 210 bears the Phosphoserine mark. Tyrosine 323 carries the phosphotyrosine modification. An N6-succinyllysine mark is found at lysine 368 and lysine 390. Residues 503–513 (FCMTEPNVSSS), 511–513 (SSS), 537–539 (WSS), and serine 539 each bind FAD. Position 513 (serine 513) interacts with substrate. A substrate-binding site is contributed by 628–631 (GPGR). Residues arginine 656, glutamine 726, and 726–730 (QVHGG) each bind FAD. Residue glycine 754 participates in substrate binding. Residues 755-757 (PDE) and glutamate 757 contribute to the FAD site. Position 765 is an N6-acetyllysine (lysine 765).

The protein belongs to the acyl-CoA dehydrogenase family. Homodimer. Requires FAD as cofactor.

It is found in the peroxisome. The protein resides in the mitochondrion membrane. The enzyme catalyses a 2,3-saturated acyl-CoA + oxidized [electron-transfer flavoprotein] + H(+) = a (2E)-enoyl-CoA + reduced [electron-transfer flavoprotein]. It carries out the reaction docosanoyl-CoA + oxidized [electron-transfer flavoprotein] + H(+) = (2E)-docosenoyl-CoA + reduced [electron-transfer flavoprotein]. The catalysed reaction is tetracosanoyl-CoA + oxidized [electron-transfer flavoprotein] + H(+) = (2E)-tetracosenoyl-CoA + reduced [electron-transfer flavoprotein]. It catalyses the reaction eicosanoyl-CoA + oxidized [electron-transfer flavoprotein] + H(+) = (2E)-eicosenoyl-CoA + reduced [electron-transfer flavoprotein]. The enzyme catalyses hexacosanoyl-CoA + oxidized [electron-transfer flavoprotein] + H(+) = (2E)-hexacosenoyl-CoA + reduced [electron-transfer flavoprotein]. It carries out the reaction tricosanoyl-CoA + oxidized [electron-transfer flavoprotein] + H(+) = (2E)-tricosenoyl-CoA + reduced [electron-transfer flavoprotein]. It participates in lipid metabolism; fatty acid beta-oxidation. Acyl-CoA dehydrogenase, that exhibits maximal activity towards saturated C22-CoA. Probably participates in beta-oxydation and energy production but could also play a role in the metabolism of specific fatty acids to control fatty acids composition of cellular lipids in brain. This chain is Acyl-CoA dehydrogenase family member 11 (Acad11), found in Mus musculus (Mouse).